A 61-amino-acid chain; its full sequence is Small ribosomal subunit protein uS14 (61 aa).

The Zn(2+) site is built by C24, C27, C40, and C43.

It belongs to the universal ribosomal protein uS14 family. Zinc-binding uS14 subfamily. In terms of assembly, part of the 30S ribosomal subunit. Contacts proteins S3 and S10. Requires Zn(2+) as cofactor.

Functionally, binds 16S rRNA, required for the assembly of 30S particles and may also be responsible for determining the conformation of the 16S rRNA at the A site. The chain is Small ribosomal subunit protein uS14 from Dictyoglomus thermophilum (strain ATCC 35947 / DSM 3960 / H-6-12).